The following is a 479-amino-acid chain: UDP-glucose flavonoid 3-O-glucosyltransferase 6 (479 aa).

The active-site Proton acceptor is the His17. Position 17 (His17) interacts with an anthocyanidin. Residue Asp121 is the Charge relay of the active site. UDP-alpha-D-glucose-binding residues include Thr143, Ala354, Gln356, His371, Trp374, Asn375, Ser376, and Glu379. Position 394 (Ala394) interacts with an anthocyanidin. UDP-alpha-D-glucose is bound by residues Glu395 and Gln396. Residues 454-479 (MSRKALEEDGSSYSSLGRFLDQIQTS) are disordered.

It belongs to the UDP-glycosyltransferase family. In terms of tissue distribution, strongly expressed in achenes, with lower expression levels detected in receptacles.

The enzyme catalyses a flavonol + UDP-alpha-D-glucose = a flavonol 3-O-beta-D-glucoside + UDP + H(+). Its function is as follows. Broad spectrum multifunctional glucosyltransferase. Catalyzes the formation of flavonol 3-O-glucosides during fruit ripening. Accepted substrates include several flavonoids, hydroxycoumarins and beta-naphthols. Uses UDP-Glc as a sugar donor, but not UDP-Gal or UDP-GlcUA. May also be involved in detoxification of xenobiotics. This Fragaria ananassa (Strawberry) protein is UDP-glucose flavonoid 3-O-glucosyltransferase 6.